The following is a 132-amino-acid chain: MEINFRHEINGQKVITAIAQDWKTGQILMVANMNKDALQKTIETGKAHYWSTSRNSQWLKGESSGHTQEVKEILVDCDMDAVVLKVKQNGAACHEGYFSCFFRKLNTKNIENFNEEDLETILEKVFNPDDVY.

Mg(2+) is bound at residue Asp76. Cys77 provides a ligand contact to Zn(2+). Mg(2+) is bound by residues Asp78 and Asp80. Cys93 and Cys100 together coordinate Zn(2+).

The protein belongs to the PRA-CH family. As to quaternary structure, homodimer. Requires Mg(2+) as cofactor. It depends on Zn(2+) as a cofactor.

The protein resides in the cytoplasm. It carries out the reaction 1-(5-phospho-beta-D-ribosyl)-5'-AMP + H2O = 1-(5-phospho-beta-D-ribosyl)-5-[(5-phospho-beta-D-ribosylamino)methylideneamino]imidazole-4-carboxamide. It participates in amino-acid biosynthesis; L-histidine biosynthesis; L-histidine from 5-phospho-alpha-D-ribose 1-diphosphate: step 3/9. Functionally, catalyzes the hydrolysis of the adenine ring of phosphoribosyl-AMP. The chain is Phosphoribosyl-AMP cyclohydrolase from Methanobrevibacter smithii (strain ATCC 35061 / DSM 861 / OCM 144 / PS).